The sequence spans 420 residues: Glucose-1-phosphate adenylyltransferase (420 aa).

Residues Tyr108, Gly173, 188–189 (EK), and Ser206 contribute to the alpha-D-glucose 1-phosphate site.

Belongs to the bacterial/plant glucose-1-phosphate adenylyltransferase family. Homotetramer.

The catalysed reaction is alpha-D-glucose 1-phosphate + ATP + H(+) = ADP-alpha-D-glucose + diphosphate. It functions in the pathway glycan biosynthesis; glycogen biosynthesis. In terms of biological role, involved in the biosynthesis of ADP-glucose, a building block required for the elongation reactions to produce glycogen. Catalyzes the reaction between ATP and alpha-D-glucose 1-phosphate (G1P) to produce pyrophosphate and ADP-Glc. The polypeptide is Glucose-1-phosphate adenylyltransferase (Paraburkholderia phytofirmans (strain DSM 17436 / LMG 22146 / PsJN) (Burkholderia phytofirmans)).